An 860-amino-acid chain; its full sequence is DNA mismatch repair protein MutS (860 aa).

Position 607–614 (607–614 (GPNMSGKS)) interacts with ATP.

Belongs to the DNA mismatch repair MutS family.

Its function is as follows. This protein is involved in the repair of mismatches in DNA. It is possible that it carries out the mismatch recognition step. This protein has a weak ATPase activity. This is DNA mismatch repair protein MutS from Listeria welshimeri serovar 6b (strain ATCC 35897 / DSM 20650 / CCUG 15529 / CIP 8149 / NCTC 11857 / SLCC 5334 / V8).